The following is a 245-amino-acid chain: Probable septum site-determining protein MinC (245 aa).

Positions 112–132 are enriched in basic and acidic residues; it reads ARERPLESAEPVAPKKPEKPP. Residues 112–140 are disordered; that stretch reads ARERPLESAEPVAPKKPEKPPEPTVKPTR.

Belongs to the MinC family. As to quaternary structure, interacts with MinD and FtsZ.

In terms of biological role, cell division inhibitor that blocks the formation of polar Z ring septums. Rapidly oscillates between the poles of the cell to destabilize FtsZ filaments that have formed before they mature into polar Z rings. Prevents FtsZ polymerization. This is Probable septum site-determining protein MinC from Pseudomonas fluorescens (strain Pf0-1).